A 123-amino-acid chain; its full sequence is Large ribosomal subunit protein bL12 (123 aa).

It belongs to the bacterial ribosomal protein bL12 family. In terms of assembly, homodimer. Part of the ribosomal stalk of the 50S ribosomal subunit. Forms a multimeric L10(L12)X complex, where L10 forms an elongated spine to which 2 to 4 L12 dimers bind in a sequential fashion. Binds GTP-bound translation factors.

Functionally, forms part of the ribosomal stalk which helps the ribosome interact with GTP-bound translation factors. Is thus essential for accurate translation. This Chlorobium phaeovibrioides (strain DSM 265 / 1930) (Prosthecochloris vibrioformis (strain DSM 265)) protein is Large ribosomal subunit protein bL12.